The following is a 331-amino-acid chain: UPF0324 membrane protein SAR0338 (331 aa).

11 helical membrane passes run F9–A26, I31–Y48, L69–G88, L93–L115, A122–F144, S154–F176, Y183–G202, L217–M234, I247–P269, L273–V295, and L308–Y330.

This sequence belongs to the UPF0324 family.

The protein resides in the cell membrane. This chain is UPF0324 membrane protein SAR0338, found in Staphylococcus aureus (strain MRSA252).